We begin with the raw amino-acid sequence, 477 residues long: Aspartyl/glutamyl-tRNA(Asn/Gln) amidotransferase subunit B (477 aa).

The protein belongs to the GatB/GatE family. GatB subfamily. Heterotrimer of A, B and C subunits.

The catalysed reaction is L-glutamyl-tRNA(Gln) + L-glutamine + ATP + H2O = L-glutaminyl-tRNA(Gln) + L-glutamate + ADP + phosphate + H(+). It catalyses the reaction L-aspartyl-tRNA(Asn) + L-glutamine + ATP + H2O = L-asparaginyl-tRNA(Asn) + L-glutamate + ADP + phosphate + 2 H(+). Its function is as follows. Allows the formation of correctly charged Asn-tRNA(Asn) or Gln-tRNA(Gln) through the transamidation of misacylated Asp-tRNA(Asn) or Glu-tRNA(Gln) in organisms which lack either or both of asparaginyl-tRNA or glutaminyl-tRNA synthetases. The reaction takes place in the presence of glutamine and ATP through an activated phospho-Asp-tRNA(Asn) or phospho-Glu-tRNA(Gln). In Legionella pneumophila subsp. pneumophila (strain Philadelphia 1 / ATCC 33152 / DSM 7513), this protein is Aspartyl/glutamyl-tRNA(Asn/Gln) amidotransferase subunit B.